We begin with the raw amino-acid sequence, 159 residues long: U-actitoxin-Avd13a/b (159 aa).

The N-terminal stretch at 1-18 is a signal peptide; the sequence is MKSIFLVFFAVCLVKAEA. A propeptide spanning residues 19 to 26 is cleaved from the precursor; sequence GKGRKREP. Disulfide bonds link Cys-33–Cys-45 and Cys-36–Cys-52. Residues 59–60 constitute a propeptide that is removed on maturation; the sequence is EP. 2 cysteine pairs are disulfide-bonded: Cys-67–Cys-79 and Cys-70–Cys-86. Positions 93 to 94 are excised as a propeptide; it reads EP. Cystine bridges form between Cys-101–Cys-113 and Cys-104–Cys-120. The propeptide occupies 127–128; it reads EP. Intrachain disulfides connect Cys-135/Cys-147 and Cys-138/Cys-154.

It belongs to the sea anemone BBH family.

It is found in the secreted. Its subcellular location is the nematocyst. Functionally, inhibits ion channels. This is U-actitoxin-Avd13a/b from Anemonia viridis (Snakelocks anemone).